Reading from the N-terminus, the 4563-residue chain is Apolipoprotein B-100 (4563 aa).

A signal peptide spans 1–27 (MDPPRPALLALLALPALLLLLLAGARA). A heparin-binding region spans residues 32–126 (LENVSLVCPK…KNSEEFAAAM (95 aa)). N-linked (GlcNAc...) asparagine glycosylation occurs at Asn-34. 2 disulfide bridges follow: Cys-39-Cys-88 and Cys-78-Cys-97. The 627-residue stretch at 46 to 672 (FKHLRKYTYN…PNNYLPKESM (627 aa)) folds into the Vitellogenin domain. Asn-185 carries an N-linked (GlcNAc...) asparagine glycan. 4 disulfides stabilise this stretch: Cys-186–Cys-212, Cys-245–Cys-261, Cys-385–Cys-390, and Cys-478–Cys-513. Positions 232–306 (TRPLSTLISS…RFFGEGTKKM (75 aa)) are heparin-binding. The heparin-binding stretch occupies residues 902–959 (NTNFFHESGLEAHVALKAGKLKFIIPSPKRPVKLLSGGNTLHLVSTTKTEVIPPLIEN). Cys-966 and Cys-976 form a disulfide bridge. An N-linked (GlcNAc...) asparagine glycan is attached at Asn-983. Cys-1112 is lipidated: S-palmitoyl cysteine. N-linked (GlcNAc...) asparagine glycans are attached at residues Asn-1368, Asn-1377, and Asn-1523. Residue Lys-2004 is modified to N6-acetyllysine. A heparin-binding region spans residues 2043-2178 (RDAVEKPQEF…EKLSQLQTYM (136 aa)). N-linked (GlcNAc...) asparagine glycans are attached at residues Asn-2239, Asn-2560, Asn-2779, Asn-2982, and Asn-3101. Positions 3161–3236 (FLKTTKQSFD…KIKFDKYKAE (76 aa)) are heparin-binding. The basic (possible receptor binding region) stretch occupies residues 3174–3184 (KAQYKKNKHRH). Cys-3194 and Cys-3324 are disulfide-bonded. N-linked (GlcNAc...) asparagine glycosylation occurs at Asn-3224. Position 3279 is a phosphoserine (Ser-3279). N-linked (GlcNAc...) asparagine glycans are attached at residues Asn-3336 and Asn-3358. The LDL receptor binding stretch occupies residues 3373–3393 (VIDALQYKLEGTTRLTRKRGL). The heparin-binding stretch occupies residues 3383-3516 (GTTRLTRKRG…REYSGTIASE (134 aa)). The segment at 3386–3394 (RLTRKRGLK) is basic (possible receptor binding region). N-linked (GlcNAc...) asparagine glycosylation is found at Asn-3411, Asn-3465, and Asn-3895. Ser-4048 bears the Phosphoserine; by FAM20C mark. Thr-4052 is modified (phosphothreonine). Residues Asn-4237 and Asn-4431 are each glycosylated (N-linked (GlcNAc...) asparagine).

Interacts with PCSK9. Interacts with MTTP. Interacts with AUP1. Interacts with CIDEB. In terms of processing, palmitoylated; structural requirement for proper assembly of the hydrophobic core of the lipoprotein particle.

It localises to the cytoplasm. The protein resides in the secreted. It is found in the lipid droplet. Functionally, apolipoprotein B is a major protein constituent of chylomicrons (apo B-48), LDL (apo B-100) and VLDL (apo B-100). Apo B-100 functions as a recognition signal for the cellular binding and internalization of LDL particles by the apoB/E receptor. In Homo sapiens (Human), this protein is Apolipoprotein B-100 (APOB).